The primary structure comprises 140 residues: ATP synthase epsilon chain (140 aa).

This sequence belongs to the ATPase epsilon chain family. As to quaternary structure, F-type ATPases have 2 components, CF(1) - the catalytic core - and CF(0) - the membrane proton channel. CF(1) has five subunits: alpha(3), beta(3), gamma(1), delta(1), epsilon(1). CF(0) has three main subunits: a, b and c.

It is found in the cell inner membrane. Functionally, produces ATP from ADP in the presence of a proton gradient across the membrane. The chain is ATP synthase epsilon chain from Herminiimonas arsenicoxydans.